Here is a 441-residue protein sequence, read N- to C-terminus: 3-phosphoshikimate 1-carboxyvinyltransferase (441 aa).

Residues 1-21 form a disordered region; that stretch reads MSANGPSHPARELKAGGSLSG. Positions 29, 30, and 34 each coordinate 3-phosphoshikimate. K29 is a binding site for phosphoenolpyruvate. G103 and R132 together coordinate phosphoenolpyruvate. Residues S177, Q179, D328, and K355 each coordinate 3-phosphoshikimate. Q179 provides a ligand contact to phosphoenolpyruvate. D328 serves as the catalytic Proton acceptor. The phosphoenolpyruvate site is built by R359 and R401.

Belongs to the EPSP synthase family. As to quaternary structure, monomer.

It localises to the cytoplasm. The enzyme catalyses 3-phosphoshikimate + phosphoenolpyruvate = 5-O-(1-carboxyvinyl)-3-phosphoshikimate + phosphate. Its pathway is metabolic intermediate biosynthesis; chorismate biosynthesis; chorismate from D-erythrose 4-phosphate and phosphoenolpyruvate: step 6/7. Functionally, catalyzes the transfer of the enolpyruvyl moiety of phosphoenolpyruvate (PEP) to the 5-hydroxyl of shikimate-3-phosphate (S3P) to produce enolpyruvyl shikimate-3-phosphate and inorganic phosphate. The polypeptide is 3-phosphoshikimate 1-carboxyvinyltransferase (Parasynechococcus marenigrum (strain WH8102)).